Here is a 156-residue protein sequence, read N- to C-terminus: Putative pre-16S rRNA nuclease (156 aa).

The protein belongs to the YqgF nuclease family.

The protein localises to the cytoplasm. Functionally, could be a nuclease involved in processing of the 5'-end of pre-16S rRNA. This is Putative pre-16S rRNA nuclease from Albidiferax ferrireducens (strain ATCC BAA-621 / DSM 15236 / T118) (Rhodoferax ferrireducens).